The chain runs to 359 residues: Prostaglandin D2 receptor (359 aa).

Topologically, residues 1 to 21 are extracellular; the sequence is MKSPFYRCQNTTSVEKGNSAV. An N-linked (GlcNAc...) asparagine glycan is attached at Asn-10. A helical membrane pass occupies residues 22 to 42; sequence MGGVLFSTGLLGNLLALGLLA. Over 43 to 59 the chain is Cytoplasmic; sequence RSGLGWCSRRPLRPLPS. A helical membrane pass occupies residues 60-80; the sequence is VFYMLVCGLTVTDLLGKCLLS. Residues 81–107 lie on the Extracellular side of the membrane; that stretch reads PVVLAAYAQNRSLRVLAPALDNSLCQA. A glycan (N-linked (GlcNAc...) asparagine) is linked at Asn-90. Cys-105 and Cys-183 are oxidised to a cystine. The chain crosses the membrane as a helical span at residues 108–128; that stretch reads FAFFMSFFGLSSTLQLLAMAL. At 129–150 the chain is on the cytoplasmic side; that stretch reads ECWLSLGHPFFYRRHITLRLGA. Residues 151 to 171 form a helical membrane-spanning segment; sequence LVAPVVSAFSLAFCALPFMGF. The Extracellular segment spans residues 172-195; that stretch reads GKFVQYCPGTWCFIQMVHEEGSLS. Residues 196–216 traverse the membrane as a helical segment; sequence VLGYSVLYSSLMALLVLATVL. Topologically, residues 217 to 262 are cytoplasmic; the sequence is CNLGAMRNLYAMHRRLQRHPRSCTRDCAEPRADGREASPQPLEELD. A helical membrane pass occupies residues 263–283; it reads HLLLLALMTVLFTMCSLPVIY. Residues 284-310 lie on the Extracellular side of the membrane; it reads RAYYGAFKDVKEKNRTSEEAEDLRALR. N-linked (GlcNAc...) asparagine glycosylation is present at Asn-297. The helical transmembrane segment at 311–331 threads the bilayer; that stretch reads FLSVISIVDPWIFIIFRSPVF. The Cytoplasmic portion of the chain corresponds to 332-359; sequence RIFFHKIFIRPLRYRSRCSNSTNMESSL.

This sequence belongs to the G-protein coupled receptor 1 family. As to expression, expressed in retinal choroid, ciliary epithelium, longitudinal and circular ciliary muscles, iris, small intestine and platelet membranes.

It localises to the cell membrane. Functionally, receptor for prostaglandin D2 (PGD2). The activity of this receptor is mainly mediated by G(s) proteins that stimulate adenylate cyclase, resulting in an elevation of intracellular cAMP. A mobilization of calcium is also observed, but without formation of inositol 1,4,5-trisphosphate. Involved in PLA2G3-dependent maturation of mast cells. PLA2G3 is secreted by immature mast cells and acts on nearby fibroblasts upstream to PTDGS to synthesize PGD2, which in turn promotes mast cell maturation and degranulation via PTGDR. In Homo sapiens (Human), this protein is Prostaglandin D2 receptor (PTGDR).